We begin with the raw amino-acid sequence, 70 residues long: Large ribosomal subunit protein bL31 (70 aa).

Zn(2+) contacts are provided by Cys17, Cys19, Cys37, and Cys40.

Belongs to the bacterial ribosomal protein bL31 family. Type A subfamily. In terms of assembly, part of the 50S ribosomal subunit. It depends on Zn(2+) as a cofactor.

Functionally, binds the 23S rRNA. The chain is Large ribosomal subunit protein bL31 from Clostridium acetobutylicum (strain ATCC 824 / DSM 792 / JCM 1419 / IAM 19013 / LMG 5710 / NBRC 13948 / NRRL B-527 / VKM B-1787 / 2291 / W).